Consider the following 110-residue polypeptide: uncharacterized protein (110 aa).

To M.jannaschii MJ0123 and A.aeolicus AA15.

This is an uncharacterized protein from Methanocaldococcus jannaschii (strain ATCC 43067 / DSM 2661 / JAL-1 / JCM 10045 / NBRC 100440) (Methanococcus jannaschii).